Consider the following 201-residue polypeptide: L-rhamnose-binding lectin SML (201 aa).

Disulfide bonds link C10/C40, C20/C99, C54/C86, C67/C73, C108/C138, C117/C195, C152/C182, and C163/C169. 2 SUEL-type lectin domains span residues L18–F100 and T107–Q196. N168 carries an N-linked (GlcNAc...) asparagine glycan.

As to quaternary structure, homodimer; non-covalently linked.

Functionally, rhamnose-binding lectin. Also binds melibiose, raffinose, D-galactose, L-arabinose, D-fucose, maltose and D-glucose with decreasing affinity. Does not bind D-arabinose, L-fucose, lactose, xylose or 2-deoxy-D-galactose. Shows strong hemagglutinating activity against rabbit erythrocytes. The polypeptide is L-rhamnose-binding lectin SML (Scomberomorus niphonius (Japanese Spanish mackerel)).